A 434-amino-acid chain; its full sequence is Glutamyl-tRNA reductase (434 aa).

Residues 49–52 (TCNR), serine 109, 114–116 (EPQ), and glutamine 120 contribute to the substrate site. Cysteine 50 functions as the Nucleophile in the catalytic mechanism. Residue 189–194 (GAGEMA) participates in NADP(+) binding.

It belongs to the glutamyl-tRNA reductase family. Homodimer.

It carries out the reaction (S)-4-amino-5-oxopentanoate + tRNA(Glu) + NADP(+) = L-glutamyl-tRNA(Glu) + NADPH + H(+). It participates in porphyrin-containing compound metabolism; protoporphyrin-IX biosynthesis; 5-aminolevulinate from L-glutamyl-tRNA(Glu): step 1/2. Its function is as follows. Catalyzes the NADPH-dependent reduction of glutamyl-tRNA(Glu) to glutamate 1-semialdehyde (GSA). This chain is Glutamyl-tRNA reductase, found in Desulfatibacillum aliphaticivorans.